Consider the following 163-residue polypeptide: Shikimate kinase (163 aa).

Residue 10–15 (GVGKTT) coordinates ATP. T14 lines the Mg(2+) pocket. Substrate is bound by residues D28, R52, and G75. ATP is bound at residue R116. R134 contacts substrate. R151 contacts ATP.

The protein belongs to the shikimate kinase family. Monomer. Mg(2+) is required as a cofactor.

The protein resides in the cytoplasm. The catalysed reaction is shikimate + ATP = 3-phosphoshikimate + ADP + H(+). It functions in the pathway metabolic intermediate biosynthesis; chorismate biosynthesis; chorismate from D-erythrose 4-phosphate and phosphoenolpyruvate: step 5/7. Functionally, catalyzes the specific phosphorylation of the 3-hydroxyl group of shikimic acid using ATP as a cosubstrate. The chain is Shikimate kinase from Streptococcus pyogenes serotype M12 (strain MGAS2096).